The sequence spans 164 residues: Transcription elongation factor GreA (164 aa).

It belongs to the GreA/GreB family.

Necessary for efficient RNA polymerase transcription elongation past template-encoded arresting sites. The arresting sites in DNA have the property of trapping a certain fraction of elongating RNA polymerases that pass through, resulting in locked ternary complexes. Cleavage of the nascent transcript by cleavage factors such as GreA or GreB allows the resumption of elongation from the new 3'terminus. GreA releases sequences of 2 to 3 nucleotides. In Helicobacter pylori (strain P12), this protein is Transcription elongation factor GreA.